The chain runs to 245 residues: Vacuolar iron transporter (245 aa).

At 1–28 the chain is on the cytoplasmic side; it reads MGEVGESEKYLLNRHKEHHFTAGETVRD. A helical transmembrane segment spans residues 29–49; it reads IIIGFSDGLTVPFALAAGLSG. The Vacuolar portion of the chain corresponds to 50–55; the sequence is ANASSS. Residues 56–76 form a helical membrane-spanning segment; that stretch reads IILTAGIAEVAAGAISMGLGG. The Cytoplasmic portion of the chain corresponds to 77-162; the sequence is YLAAKSEADH…PRRALQSALT (86 aa). Residues Glu-94, Glu-97, Glu-105, Glu-108, Met-141, and Glu-145 each contribute to the Fe cation site. Residues 163–183 form a helical membrane-spanning segment; the sequence is IAISYVLSGLIPLLPYMFIPI. The Vacuolar segment spans residues 184 to 186; that stretch reads AQK. Residues 187–207 form a helical membrane-spanning segment; sequence AVVSSVIVTIFALLIFGFAKG. Residues 208–214 lie on the Cytoplasmic side of the membrane; the sequence is YFTGNKP. Residues 215-235 traverse the membrane as a helical segment; the sequence is VWSALQTALIGAIASAAAFGM. Residues 236-245 are Vacuolar-facing; sequence AKGCASSVFE.

Belongs to the CCC1 family. Expressed in petal tissues, but not in other parts of the plant, such as leaves, roots, sepals and stems.

It localises to the vacuole membrane. The enzyme catalyses Fe(2+)(in) = Fe(2+)(out). Its function is as follows. Vacuolar iron transporter involved in the transfer of iron ions from the cytosol to the vacuole for intracellular iron storage. Plays an essential role in the development of blue coloration in cornflower petals. This chain is Vacuolar iron transporter, found in Centaurea cyanus (Garden cornflower).